Here is a 94-residue protein sequence, read N- to C-terminus: C-X-C motif chemokine 11-1 (94 aa).

A signal peptide spans 1–19 (MKTVTALLLVSLAVVAIEG). 2 disulfides stabilise this stretch: C27–C54 and C29–C71.

The protein belongs to the intercrine alpha (chemokine CxC) family.

It is found in the secreted. Ligand for cxcr3.2. Chemotactic for macrophages. The chain is C-X-C motif chemokine 11-1 (cxcl11.1) from Danio rerio (Zebrafish).